A 692-amino-acid chain; its full sequence is MTDLNPTARAAGLRALLHRYNHEYYVLDAPSVPDAEYDRLFRELEALEAAHPELASADSPTRRVGGAPLAAFASVTHRLPMLSLNNVFSDMQDSDPAGRHAELAAFDQRVRDGLGLDEVEYAVEPKFDGLAVSLVYEHGVLVQGATRGDGETGENVTENLRTVRSIPLRLENAPGDDLFAPAVVPARLEVRGEVLMLKRDFERLNSEQDAAGLKRFANPRNAAAGSLRQLDSRITASRRLTFFAYAVAEADGVSLPATHSATMDWLAGLGLPVSRQRSVVRGLAGLTGAYEAMLAQRAGLPFDIDGVVYKVNRLSEQARLGFVSRAPRFAVAHKFPAEEALTVVEDITVQVGRTGAITPVARLQPVFVGGVTVTNATLHNEDEVRRKDVHVGDTVIVRRAGDVIPEVVSVLAERRPPQARAFEMPLVCPVCGSHIVREADEAVARCSGGLYCSAQHKQALQHFASRKALDVEGLGEKLVDQLVDAGLVHTPADLFALDQPALARLERMGDKSAENLVRALDACRHTTLARFVYALGIRNVGEATARDLARHFGTLDALMAADQDMLMTAPDVGPIVARSIVDFFAEAHNREVVDALLAAGVSWPVVETVTSAGVAGVSGKTFVLTGTLPTLGRDDAKARIEAAGGKVTGSVSKKTHYVVAGEAAGSKLDKAHELGITVLDEAALLALLAGNA.

NAD(+) contacts are provided by residues 34 to 38, 83 to 84, and glutamate 124; these read DAEYD and SL. Lysine 126 functions as the N6-AMP-lysine intermediate in the catalytic mechanism. Positions 147, 193, 310, and 334 each coordinate NAD(+). Residues cysteine 428, cysteine 431, cysteine 446, and cysteine 452 each coordinate Zn(2+). The region spanning 612–692 is the BRCT domain; it reads AGVAGVSGKT…ALLALLAGNA (81 aa).

This sequence belongs to the NAD-dependent DNA ligase family. LigA subfamily. It depends on Mg(2+) as a cofactor. Mn(2+) serves as cofactor.

The enzyme catalyses NAD(+) + (deoxyribonucleotide)n-3'-hydroxyl + 5'-phospho-(deoxyribonucleotide)m = (deoxyribonucleotide)n+m + AMP + beta-nicotinamide D-nucleotide.. Functionally, DNA ligase that catalyzes the formation of phosphodiester linkages between 5'-phosphoryl and 3'-hydroxyl groups in double-stranded DNA using NAD as a coenzyme and as the energy source for the reaction. It is essential for DNA replication and repair of damaged DNA. This chain is DNA ligase, found in Laribacter hongkongensis (strain HLHK9).